We begin with the raw amino-acid sequence, 364 residues long: Histidinol-phosphate aminotransferase 2 (364 aa).

An N6-(pyridoxal phosphate)lysine modification is found at lysine 223.

It belongs to the class-II pyridoxal-phosphate-dependent aminotransferase family. Histidinol-phosphate aminotransferase subfamily. As to quaternary structure, homodimer. Pyridoxal 5'-phosphate is required as a cofactor.

The enzyme catalyses L-histidinol phosphate + 2-oxoglutarate = 3-(imidazol-4-yl)-2-oxopropyl phosphate + L-glutamate. It participates in amino-acid biosynthesis; L-histidine biosynthesis; L-histidine from 5-phospho-alpha-D-ribose 1-diphosphate: step 7/9. The chain is Histidinol-phosphate aminotransferase 2 (hisC2) from Oceanobacillus iheyensis (strain DSM 14371 / CIP 107618 / JCM 11309 / KCTC 3954 / HTE831).